We begin with the raw amino-acid sequence, 802 residues long: Protein enabled homolog (802 aa).

Positions 1–111 (MSEQSICQAR…SAMMHALEVL (111 aa)) constitute a WH1 domain. The span at 143 to 155 (NSQLPAQVQNGPS) shows a compositional bias: polar residues. Residues 143–166 (NSQLPAQVQNGPSQEELEIQRRQL) are disordered. A Phosphoserine modification is found at Ser-144. The stretch at 154 to 258 (PSQEELEIQR…ERERRMSNAA (105 aa)) forms a coiled coil. 7 consecutive repeat copies span residues 175–179 (LERER), 180–184 (MERER), 185–189 (LERER), 190–194 (LERER), 195–199 (LERER), 200–204 (LEQEQ), and 205–209 (LERQR). A 7 X 5 AA tandem repeats of [LM]-E-[QR]-[EQ]-[QR] region spans residues 175-209 (LERERMERERLERERLERERLERERLEQEQLERQR). Basic and acidic residues predominate over residues 245 to 254 (QVEWERERRM). Disordered stretches follow at residues 245 to 287 (QVEW…PSYA) and 341 to 622 (ATVP…RPLT). Ser-255 is modified (phosphoserine; by PKA). The segment covering 255 to 278 (SNAAPSSDSSLSSAPLPEYSSCQP) has biased composition (low complexity). Polar residues predominate over residues 348–361 (NKNSRPSSPVNTPS). Ser-383 carries the phosphoserine modification. The span at 386 to 410 (IMISSPPGKATGPRPVLPVCVSSPV) shows a compositional bias: low complexity. Over residues 431–464 (VSPPPTSGPAAPPPPPPPPPPPPPPPLPPPPLPP) the composition is skewed to pro residues. Residues 485–505 (STPSSKPSVLPSPSAGAPASA) are compositionally biased toward low complexity. A compositionally biased stretch (polar residues) spans 525–535 (AASQPAESPTP). The span at 542-553 (PPAPPPPPPLPS) shows a compositional bias: pro residues. Position 557 is a phosphotyrosine (Tyr-557). A compositionally biased stretch (pro residues) spans 561 to 605 (LPPPPGPPPPPPLPSTGPPPPPPPPPPLPNQAPPPPPPPPAPPLP). Residues 623–643 (GLAAAIAGAKLRKVSRVEDGS) form an EVH2 block A region. An EVH2 region spans residues 623–799 (GLAAAIAGAK…DAIRQELSKS (177 aa)). Residues 632 to 635 (KLRK) carry the KLKR motif. Disordered regions lie at residues 639 to 675 (VEDGSFPGGGNTGSVSLASSKADAGRGNGPLPLGGSG) and 691 to 764 (AEKG…TEGL). Over residues 664–675 (RGNGPLPLGGSG) the composition is skewed to gly residues. Residues 674 to 691 (SGLMEEMSALLARRRRIA) are EVH2 block B. Residues 731–760 (RTNTMNGSKSPVISRPKSTPSSQPSANGVQ) are compositionally biased toward polar residues. Residues Ser-738 and Ser-740 each carry the phosphoserine modification. The interval 765-799 (DYDRLKQDILDEMRKELAKLKEELIDAIRQELSKS) is EVH2 block C. Residues 767–797 (DRLKQDILDEMRKELAKLKEELIDAIRQELS) adopt a coiled-coil conformation.

The protein belongs to the Ena/VASP family. In terms of assembly, homotetramer. Interacts with APBB1IP, APBB1, PFN1 and ROBO4. Isoforms, containing the polyproline-rich regions with PPLP motifs, bind the WW domain of APBB1IP. Isoforms, containing the PPSY motif, bind, in vitro, to the WW2 and WW3 domains of NEDD4 and to the WW1 domain of YAP1. Binds the SH3 domain of BAIAP2-alpha but only after the autoinhibitory region of BAIAP2-alpha has been blocked by interaction with CDC42. Interacts, via the EVH1/WH1 domain, with the Pro-rich domains from VCL, ZYX and Listeria monocytogenes actA and with TES (via LIM domain). The TES LIM domain and the Pro-rich domains from VCL or ZYX compete for the same binding site. Interaction with ZYX is important for targeting ENAH to focal adhesions and enhances production of actin-rich structures at the apical surface of cells. Binds GPHN. Heterotrimer with TES and ACTL7A. Interacts with FAT1 (via EVH1 domains). Interacts, through the Pro-rich region, with the C-terminal SH3 domain of DNMPB. Interacts with PRPF40A. Post-translationally, NTN1-induced PKA phosphorylation on Ser-255 directly parallels the formation of filopodial protrusions. As to expression, expressed in heart and testis, lower levels in lung, skeletal muscle, kidney, pancreas and brain. Isoform 5 is expressed exclusively in the brain. Isoform 2 is expressed predominantly in brain, testis, ovary and fat. In the brain, isoforms 2 and 5 are expressed at highest levels in the hippocampus, cortex and midbrain, and at lowest levels in the striatum and cerebellum. Isoform 6 is expressed in brain and spleen.

It localises to the cytoplasm. The protein resides in the cytoskeleton. Its subcellular location is the cell projection. The protein localises to the lamellipodium. It is found in the filopodium. It localises to the synapse. The protein resides in the cell junction. Its subcellular location is the focal adhesion. Ena/VASP proteins are actin-associated proteins involved in a range of processes dependent on cytoskeleton remodeling and cell polarity such as axon guidance and lamellipodial and filopodial dynamics in migrating cells. ENAH induces the formation of F-actin rich outgrowths in fibroblasts. Acts synergistically with BAIAP2-alpha and downstream of NTN1 to promote filipodia formation. This Mus musculus (Mouse) protein is Protein enabled homolog (Enah).